Here is a 547-residue protein sequence, read N- to C-terminus: (R)-citramalate synthase (547 aa).

One can recognise a Pyruvate carboxyltransferase domain in the interval 8–278 (LWLYDTTLRD…YDCIEPEKLA (271 aa)).

Belongs to the alpha-IPM synthase/homocitrate synthase family.

It catalyses the reaction pyruvate + acetyl-CoA + H2O = (3R)-citramalate + CoA + H(+). Its pathway is amino-acid biosynthesis; L-isoleucine biosynthesis; 2-oxobutanoate from pyruvate: step 1/3. Its function is as follows. Catalyzes the condensation of pyruvate and acetyl-coenzyme A to form (R)-citramalate. In Synechocystis sp. (strain ATCC 27184 / PCC 6803 / Kazusa), this protein is (R)-citramalate synthase.